We begin with the raw amino-acid sequence, 198 residues long: FMN-dependent NADH:quinone oxidoreductase (198 aa).

FMN is bound by residues Ser10, 16 to 18 (SQS), 94 to 97 (MYNF), and 138 to 141 (TRGG).

It belongs to the azoreductase type 1 family. As to quaternary structure, homodimer. FMN serves as cofactor.

The catalysed reaction is 2 a quinone + NADH + H(+) = 2 a 1,4-benzosemiquinone + NAD(+). It catalyses the reaction N,N-dimethyl-1,4-phenylenediamine + anthranilate + 2 NAD(+) = 2-(4-dimethylaminophenyl)diazenylbenzoate + 2 NADH + 2 H(+). Quinone reductase that provides resistance to thiol-specific stress caused by electrophilic quinones. In terms of biological role, also exhibits azoreductase activity. Catalyzes the reductive cleavage of the azo bond in aromatic azo compounds to the corresponding amines. In Shewanella baltica (strain OS195), this protein is FMN-dependent NADH:quinone oxidoreductase.